Reading from the N-terminus, the 1181-residue chain is MAAVQVVGSWPSVQPREAPREAIPERGNGFRLLSARLCALRPDDSSSARTEIHLLFDQLISENYSEGSGVAPEDVSALLVQACRLVPLNQNHLVSKVSQLIHHLLNRLQVIVDEQHLDFLLAYTISAIHQCSSWTHREILQALAALVYCNGSKCQKYLPELLGNTGLLMKLSDLAQSDPEVRRAAVHCMANLCLSVPGQPYLEEPYQNVCFQAFLTILQSPKSSDMDDITFCMLLQNALKGIQSLLNGGRMKLTQTDELGALLAVLKKFMFHGLPGLNIEMPTVLYPTPLPQYDGRTPIKPQQSESSASRPTLNKKKKSKVKPKKIQQGEEEEKESSGEIEAAPVTGTGRVNLHEGNTWCPSSLGVQSLPLDGSGAAEKDGVSSSFSSSSWKRVSSSESDFSDAEGGMQSKMRSYQAKVRQGALVCFLSTIKSIEKKVLYGYWSAFIPDTPELGSPQSVSLMTLTLKDPSPKTRACALQVLSAILEGSKQFLSVAEDTSDHRRAFTPFSVMIACSIRELHRCLLLALVAESSSQTVTQIIKCLANLVSNAPYDRLKLSLLTKVWNQIKPYIRHKDVNVRVSSLTLLGAIVSTHAPLPEVQLLLQQPCSSGLGNSNSATPHLSPPDWWKKAPAGPSLEETSVSSPKGSSEPCWLIRLCISIVVLPKEDSCSGSDAGSAAGSTYEPSPMRLEALQVLTLLARGYFSMTQAYLMELGEVICKCMGEADPSIQLHGAKLLEELGTGLIQQYKPDSTAAPDQRAPVFLVVMFWTMMLNGPLPRALQNSEHPTLQASACDALSSILPEAFSNLPNDRQMLCITVLLGLNDSKNRLVKAATSRALGVYVLFPCLRQDVIFVADAANAILMSLEDKSLNVRAKAAWSLGNLTDTLIVNMETPDPSFQEEFSGLLLLKMLRSAIEASKDKDKVKSNAVRALGNLLHFLQPSHIEKPTFAEIIEESIQALISTVLTEAAMKVRWNACYAMGNVFKNPALPLGTAPWTSQAYNALTSVVTSCKNFKVRIRSAAALSVPGKREQYGSVDQYARIWNALVTALQKSEDTIDFLEFKYCVSLRTQICQALIHLLSLASASDLPCMKETLELSGNMVQSYILQFLKSGAEGDDTGAPHSPQERDQMVRMALKHMGSIQAPTGDTARRAIMGFLEEILAVCFDSSGSQGALPGLTNQ.

One copy of the HEAT 1 repeat lies at 159–198 (PELLGNTGLLMKLSDLAQSDPEVRRAAVHCMANLCLSVPG). Disordered stretches follow at residues 292–347 (QYDG…PVTG) and 371–390 (LDGS…SSSS). Over residues 300-312 (KPQQSESSASRPT) the composition is skewed to polar residues. Residues 313 to 325 (LNKKKKSKVKPKK) show a composition bias toward basic residues. 2 positions are modified to phosphoserine: Ser-336 and Ser-337. 2 positions are modified to phosphoserine: Ser-399 and Ser-402. HEAT repeat units lie at residues 452–490 (ELGS…GSKQ), 515–552 (SIRE…NAPY), and 558–595 (SLLT…THAP). The segment at 613 to 646 (NSNSATPHLSPPDWWKKAPAGPSLEETSVSSPKG) is disordered. Residue Thr-618 is modified to Phosphothreonine. Positions 637 to 646 (EETSVSSPKG) are enriched in polar residues. Position 643 is a phosphoserine (Ser-643).

In terms of tissue distribution, amplified in breast cancer cell lines MCF-7 and BT-474.

Amplification-dependent oncogene. This Homo sapiens (Human) protein is HEAT repeat-containing protein 6 (HEATR6).